The primary structure comprises 235 residues: Ribonuclease 3 (235 aa).

Positions Ile6 to Gly131 constitute an RNase III domain. Glu44 serves as a coordination point for Mg(2+). The active site involves Asp48. 2 residues coordinate Mg(2+): Asp117 and Glu120. Glu120 is an active-site residue. The DRBM domain occupies Asp156 to Ile225.

It belongs to the ribonuclease III family. As to quaternary structure, homodimer. Mg(2+) is required as a cofactor.

It is found in the cytoplasm. It catalyses the reaction Endonucleolytic cleavage to 5'-phosphomonoester.. In terms of biological role, digests double-stranded RNA. Involved in the processing of primary rRNA transcript to yield the immediate precursors to the large and small rRNAs (23S and 16S). Processes some mRNAs, and tRNAs when they are encoded in the rRNA operon. Processes pre-crRNA and tracrRNA of type II CRISPR loci if present in the organism. The sequence is that of Ribonuclease 3 from Bartonella quintana (strain Toulouse) (Rochalimaea quintana).